We begin with the raw amino-acid sequence, 270 residues long: Mlc titration factor A (270 aa).

The Zn(2+) site is built by H111, H148, H152, and E211.

This sequence belongs to the MtfA family. In terms of assembly, interacts with Mlc. Zn(2+) serves as cofactor.

It is found in the cytoplasm. Its function is as follows. Involved in the modulation of the activity of the glucose-phosphotransferase system (glucose-PTS). Interacts with the transcriptional repressor Mlc, preventing its interaction with DNA and leading to the modulation of expression of genes regulated by Mlc, including ptsG, which encodes the PTS system glucose-specific EIICB component. In terms of biological role, shows zinc-dependent metallopeptidase activity. The polypeptide is Mlc titration factor A (Yersinia pestis bv. Antiqua (strain Nepal516)).